Reading from the N-terminus, the 270-residue chain is 3-phenylpropionate-dihydrodiol/cinnamic acid-dihydrodiol dehydrogenase (270 aa).

Position 10 to 34 (10 to 34 (FITGGGSGLGLALVERFIEEGAQVA)) interacts with NAD(+). S143 serves as a coordination point for substrate. Y156 (proton acceptor) is an active-site residue.

It belongs to the short-chain dehydrogenases/reductases (SDR) family.

It catalyses the reaction 3-(cis-5,6-dihydroxycyclohexa-1,3-dien-1-yl)propanoate + NAD(+) = 3-(2,3-dihydroxyphenyl)propanoate + NADH + H(+). It carries out the reaction (2E)-3-(cis-5,6-dihydroxycyclohexa-1,3-dien-1-yl)prop-2-enoate + NAD(+) = (2E)-3-(2,3-dihydroxyphenyl)prop-2-enoate + NADH + H(+). It participates in aromatic compound metabolism; 3-phenylpropanoate degradation. In terms of biological role, converts 3-phenylpropionate-dihydrodiol (PP-dihydrodiol) and cinnamic acid-dihydrodiol (CI-dihydrodiol) into 3-(2,3-dihydroxylphenyl)propanoic acid (DHPP) and 2,3-dihydroxicinnamic acid (DHCI), respectively. The sequence is that of 3-phenylpropionate-dihydrodiol/cinnamic acid-dihydrodiol dehydrogenase from Escherichia coli O157:H7.